Consider the following 1891-residue polypeptide: Endoribonuclease Dicer-L (1891 aa).

The Helicase ATP-binding domain maps to 41 to 217; it reads LLEAALDHNT…DLEEKIQKLE (177 aa). Position 54–61 (54–61) interacts with ATP; the sequence is LNSGSGKT. Positions 165–168 match the DECH box motif; that stretch reads DECH. The Helicase C-terminal domain maps to 425–594; it reads SFPSPFTNIL…SIDCGNTESE (170 aa). The 93-residue stretch at 622-714 folds into the Dicer dsRNA-binding fold domain; the sequence is AIGHINRYCA…MPVGKETVKY (93 aa). The PAZ domain occupies 887-1034; the sequence is KFVEDIEKSE…LVPELCAIHP (148 aa). RNase III domains follow at residues 1248–1379 and 1635–1793; these read TSDM…ETSG and FENF…MDSG. Glu1292, Asp1370, Glu1373, Glu1674, Asp1779, and Glu1782 together coordinate Mg(2+). Residues 1818–1883 enclose the DRBM domain; the sequence is VPRSPVRELL…ARRALRSLKA (66 aa).

It belongs to the helicase family. Dicer subfamily. In terms of assembly, component of the RISC loading complex (RLC), or micro-RNA (miRNA) loading complex (miRLC), which is composed of dicer1, ago2 and tarbp2; dicer1 and tarbp2 are required to process precursor miRNAs (pre-miRNAs) to mature miRNAs and then load them onto ago2. Note that the trimeric RLC/miRLC is also referred to as RISC. It depends on Mg(2+) as a cofactor. Mn(2+) is required as a cofactor.

The protein resides in the cytoplasm. The enzyme catalyses Endonucleolytic cleavage to 5'-phosphomonoester.. Functionally, double-stranded RNA (dsRNA) endoribonuclease playing a central role in short dsRNA-mediated post-transcriptional gene silencing. Cleaves naturally occurring long dsRNAs and short hairpin pre-microRNAs (miRNA) into fragments of 21 to 23 nucleotides with 3' overhang of two nucleotides, producing respectively short interfering RNAs (siRNA) and mature microRNAs. SiRNAs and miRNAs serve as guide to direct the RNA-induced silencing complex (RISC) to complementary RNAs to degrade them or prevent their translation. Gene silencing mediated by siRNAs, also called RNA interference, controls the elimination of transcripts from mobile and repetitive DNA elements of the genome but also the degradation of exogenous RNA of viral origin for instance. The miRNA pathway on the other side is a mean to specifically regulate the expression of target genes. During embryonic development, at the left-right organizer, post-transcriptionally regulates the expression of dand5 in flow sensor cells. In post-flow stages, acts along with Bicc1 to repress dand5 mRNA translation and decay. Decreased Dand5 expression lifts repression of Nodal and defines leftness by induction of the lateral plate mesoderm Nodal signaling cascade. This chain is Endoribonuclease Dicer-L (dicer1.L), found in Xenopus laevis (African clawed frog).